The following is a 303-amino-acid chain: Glycine betaine/carnitine/choline-binding protein OpuCC (303 aa).

The signal sequence occupies residues 1 to 20 (MTKIKWLGAFALVFVMLLGG). The N-palmitoyl cysteine moiety is linked to residue C21. A lipid anchor (S-diacylglycerol cysteine) is attached at C21.

The protein belongs to the OsmX family. The complex is composed of two ATP-binding proteins (OpuCA), two transmembrane proteins (OpuCB and OpuCD) and a solute-binding protein (OpuCC).

The protein resides in the cell membrane. Its function is as follows. Member of a high affinity multicomponent binding-protein-dependent transport system for glycine betaine, carnitine, and choline. The polypeptide is Glycine betaine/carnitine/choline-binding protein OpuCC (opuCC) (Bacillus subtilis (strain 168)).